The primary structure comprises 311 residues: HPr kinase/phosphorylase (311 aa).

Residues His139 and Lys160 contribute to the active site. Residue 154-161 (GASGVGKS) coordinates ATP. Residue Ser161 participates in Mg(2+) binding. Asp178 serves as the catalytic Proton acceptor; for phosphorylation activity. Proton donor; for dephosphorylation activity. The segment at 202-211 (LEIRGIGIID) is important for the catalytic mechanism of both phosphorylation and dephosphorylation. Glu203 contacts Mg(2+). Arg244 is a catalytic residue. An important for the catalytic mechanism of dephosphorylation region spans residues 265–270 (PVRPGR).

Belongs to the HPrK/P family. In terms of assembly, homohexamer. Mg(2+) serves as cofactor.

It carries out the reaction [HPr protein]-L-serine + ATP = [HPr protein]-O-phospho-L-serine + ADP + H(+). The enzyme catalyses [HPr protein]-O-phospho-L-serine + phosphate + H(+) = [HPr protein]-L-serine + diphosphate. Its function is as follows. Catalyzes the ATP- as well as the pyrophosphate-dependent phosphorylation of a specific serine residue in HPr, a phosphocarrier protein of the phosphoenolpyruvate-dependent sugar phosphotransferase system (PTS). HprK/P also catalyzes the pyrophosphate-producing, inorganic phosphate-dependent dephosphorylation (phosphorolysis) of seryl-phosphorylated HPr (P-Ser-HPr). The two antagonistic activities of HprK/P are regulated by several intracellular metabolites, which change their concentration in response to the absence or presence of rapidly metabolisable carbon sources (glucose, fructose, etc.) in the growth medium. Therefore, by controlling the phosphorylation state of HPr, HPrK/P is a sensor enzyme that plays a major role in the regulation of carbon metabolism and sugar transport: it mediates carbon catabolite repression (CCR), and regulates PTS-catalyzed carbohydrate uptake and inducer exclusion. The sequence is that of HPr kinase/phosphorylase from Exiguobacterium sibiricum (strain DSM 17290 / CCUG 55495 / CIP 109462 / JCM 13490 / 255-15).